We begin with the raw amino-acid sequence, 448 residues long: Glutamyl-tRNA reductase (448 aa).

Substrate is bound by residues 49 to 52 (TCNR), serine 109, 114 to 116 (ETQ), and glutamine 120. Cysteine 50 functions as the Nucleophile in the catalytic mechanism. Residue 189–194 (GAGETG) coordinates NADP(+). Positions 427-448 (PVDEVEETDATSAKAPLRALMR) are disordered.

The protein belongs to the glutamyl-tRNA reductase family. As to quaternary structure, homodimer.

It catalyses the reaction (S)-4-amino-5-oxopentanoate + tRNA(Glu) + NADP(+) = L-glutamyl-tRNA(Glu) + NADPH + H(+). Its pathway is porphyrin-containing compound metabolism; protoporphyrin-IX biosynthesis; 5-aminolevulinate from L-glutamyl-tRNA(Glu): step 1/2. Functionally, catalyzes the NADPH-dependent reduction of glutamyl-tRNA(Glu) to glutamate 1-semialdehyde (GSA). This chain is Glutamyl-tRNA reductase, found in Exiguobacterium sp. (strain ATCC BAA-1283 / AT1b).